The following is a 255-amino-acid chain: Small ribosomal subunit protein eS1 (255 aa).

Ala-2 bears the N-acetylalanine; partial mark.

It belongs to the eukaryotic ribosomal protein eS1 family. As to quaternary structure, component of the small ribosomal subunit. Mature ribosomes consist of a small (40S) and a large (60S) subunit. The 40S subunit contains about 33 different proteins and 1 molecule of RNA (18S). The 60S subunit contains about 49 different proteins and 3 molecules of RNA (25S, 5.8S and 5S).

It is found in the cytoplasm. The chain is Small ribosomal subunit protein eS1 from Arthroderma otae (strain ATCC MYA-4605 / CBS 113480) (Microsporum canis).